The primary structure comprises 130 residues: Small ribosomal subunit protein uS8 (130 aa).

Belongs to the universal ribosomal protein uS8 family. In terms of assembly, part of the 30S ribosomal subunit. Contacts proteins S5 and S12.

One of the primary rRNA binding proteins, it binds directly to 16S rRNA central domain where it helps coordinate assembly of the platform of the 30S subunit. This Shewanella pealeana (strain ATCC 700345 / ANG-SQ1) protein is Small ribosomal subunit protein uS8.